A 431-amino-acid polypeptide reads, in one-letter code: REST corepressor 1 (431 aa).

Over residues 1–10 (MIEKGAEISG) the composition is skewed to basic and acidic residues. The tract at residues 1-53 (MIEKGAEISGKRRGRNNAANSKSLGTNVNGSNSWEEGSSSSSSDDEPGGGGMR) is disordered. The span at 17 to 28 (NAANSKSLGTNV) shows a compositional bias: polar residues. Residues 29-42 (NGSNSWEEGSSSSS) show a composition bias toward low complexity. The 86-residue stretch at 50–135 (GGMRVGLQYQ…KSLADLLNFT (86 aa)) folds into the ELM2 domain. Positions 136–187 (PFPDEWTVEDRVLFEQAFSFHGKTFHRIQQMLPDKSIASLVKFYYSWKKTRS) constitute an SANT 1 domain. The tract at residues 190–262 (SVMDRHARKQ…NRAKRKPPNG (73 aa)) is disordered. Residues 224–242 (EQPKEAKKEVPKNDTVPHI) show a composition bias toward basic and acidic residues. Positions 267 to 314 (QEDVEAVSANANAATTVLRQLDMELVSIKRQIQNIKQTNSAFKEKLQG) form a coiled coil. The 52-residue stretch at 327-378 (KFNARWTTEEQLLAVQAIRMYGRDFQAISDVIGNKSVVQVKNFFVNYRRRFN) folds into the SANT 2 domain.

It belongs to the CoREST family. As to quaternary structure, component of a BHC histone deacetylase complex that contains KDM1A. As to expression, expressed in territories in which neurogenesis takes place.

The protein localises to the nucleus. Essential component of the BHC complex, a corepressor complex that represses transcription of neuron-specific genes in non-neuronal cells. The BHC complex is recruited at RE1/NRSE sites by REST and acts by deacetylating and demethylating specific sites on histones, thereby acting as a chromatin modifier. In the BHC complex, it serves as a molecular beacon for the recruitment of molecular machinery that imposes silencing across a chromosomal interval. Plays a central role in demethylation of Lys-4 of histone H3 by promoting demethylase activity of KDM1A on core histones and nucleosomal substrates. The chain is REST corepressor 1 (rcor1) from Xenopus laevis (African clawed frog).